The chain runs to 543 residues: Probable protein kinase UbiB (543 aa).

Residues 123-501 (DFDSQALASA…GSRQGRARYL (379 aa)) enclose the Protein kinase domain. Residues 129–137 (LASASIAQV) and K152 contribute to the ATP site. D287 serves as the catalytic Proton acceptor. Residues 517–537 (MVNIALWPIGLYVAGGVIWLA) traverse the membrane as a helical segment.

It belongs to the ABC1 family. UbiB subfamily.

It is found in the cell inner membrane. The protein operates within cofactor biosynthesis; ubiquinone biosynthesis [regulation]. Its function is as follows. Is probably a protein kinase regulator of UbiI activity which is involved in aerobic coenzyme Q (ubiquinone) biosynthesis. The polypeptide is Probable protein kinase UbiB (Edwardsiella ictaluri (strain 93-146)).